The sequence spans 553 residues: ATP synthase F(1) complex subunit alpha, mitochondrial (553 aa).

The transit peptide at 1-43 (MLSVRVAAAVARALPRRAGLVSKNALGSSFVGARNLHASNTRL) directs the protein to the mitochondrion. Residues S53 and S65 each carry the phosphoserine modification. S76 carries the phosphoserine; alternate modification. Residue S76 is glycosylated (O-linked (GlcNAc) serine; alternate). S106 bears the Phosphoserine mark. 3 positions are modified to N6-acetyllysine: K123, K126, and K132. T134 carries the phosphothreonine modification. The residue at position 161 (K161) is an N6-acetyllysine; alternate. At K161 the chain carries N6-succinyllysine; alternate. S166 is modified (phosphoserine). N6-acetyllysine; alternate is present on K167. K167 is modified (N6-succinyllysine; alternate). The residue at position 184 (S184) is a Phosphoserine. R204 carries the post-translational modification Omega-N-methylarginine. ATP is bound by residues Q215, G217, K218, T219, and S220. Position 219 (T219) interacts with Mg(2+). K230 and K239 each carry N6-acetyllysine; alternate. N6-succinyllysine; alternate occurs at positions 230 and 239. K240 carries the N6-acetyllysine modification. Residues K261 and K305 each carry the N6-acetyllysine; alternate modification. N6-succinyllysine; alternate occurs at positions 261 and 305. Position 312 (D312) interacts with Mg(2+). K427 carries the post-translational modification N6-acetyllysine; alternate. An N6-succinyllysine; alternate modification is found at K427. K434 bears the N6-acetyllysine mark. Residues Q473 and Q475 each coordinate ATP. 2 positions are modified to N6-acetyllysine; alternate: K498 and K506. 2 positions are modified to N6-succinyllysine; alternate: K498 and K506. S521 is subject to Phosphoserine. N6-acetyllysine; alternate is present on residues K531 and K539. N6-succinyllysine; alternate occurs at positions 531 and 539. N6-acetyllysine is present on K541.

Belongs to the ATPase alpha/beta chains family. Homotrimer. Component of the ATP synthase complex composed at least of ATP5F1A/subunit alpha, ATP5F1B/subunit beta, ATP5MC1/subunit c (homooctomer), MT-ATP6/subunit a, MT-ATP8/subunit 8, ATP5ME/subunit e, ATP5MF/subunit f, ATP5MG/subunit g, ATP5MK/subunit k, ATP5MJ/subunit j, ATP5F1C/subunit gamma, ATP5F1D/subunit delta, ATP5F1E/subunit epsilon, ATP5PF/subunit F6, ATP5PB/subunit b, ATP5PD/subunit d, ATP5PO/subunit OSCP. ATP synthase complex consists of a soluble F(1) head domain (subunits alpha(3) and beta(3)) - the catalytic core - and a membrane F(0) domain - the membrane proton channel (subunits c, a, 8, e, f, g, k and j). These two domains are linked by a central stalk (subunits gamma, delta, and epsilon) rotating inside the F1 region and a stationary peripheral stalk (subunits F6, b, d, and OSCP). Interacts with ATPAF2. Interacts with HRG; the interaction occurs on the surface of T-cells and alters the cell morphology when associated with concanavalin (in vitro). Interacts with PLG (angiostatin peptide); the interaction inhibits most of the angiogenic properties of angiostatin. Interacts with BLOC1S1. Interacts with BCL2L1 isoform BCL-X(L); the interaction mediates the association of BCL2L1 isoform BCL-X(L) with the mitochondrial membrane F(1)F(0) ATP synthase and enhances neurons metabolic efficiency. Interacts with CLN5 and PPT1. Interacts with S100A1; this interaction increases F1-ATPase activity. Interacts with ABCB7; this interaction allows the regulation of cellular iron homeostasis and cellular reactive oxygen species (ROS) levels in cardiomyocytes. Post-translationally, acetylated on lysine residues. BLOC1S1 is required for acetylation. Acetylation of Lys-132, Lys-230 and Lys-498 is observed in liver mitochondria from fasted mice but not from fed mice.

Its subcellular location is the mitochondrion inner membrane. It is found in the cell membrane. In terms of biological role, subunit alpha, of the mitochondrial membrane ATP synthase complex (F(1)F(0) ATP synthase or Complex V) that produces ATP from ADP in the presence of a proton gradient across the membrane which is generated by electron transport complexes of the respiratory chain. ATP synthase complex consist of a soluble F(1) head domain - the catalytic core - and a membrane F(1) domain - the membrane proton channel. These two domains are linked by a central stalk rotating inside the F(1) region and a stationary peripheral stalk. During catalysis, ATP synthesis in the catalytic domain of F(1) is coupled via a rotary mechanism of the central stalk subunits to proton translocation. In vivo, can only synthesize ATP although its ATP hydrolase activity can be activated artificially in vitro. With the catalytic subunit beta (ATP5F1B), forms the catalytic core in the F(1) domain. Subunit alpha does not bear the catalytic high-affinity ATP-binding sites. This Mus musculus (Mouse) protein is ATP synthase F(1) complex subunit alpha, mitochondrial.